A 93-amino-acid chain; its full sequence is uncharacterized protein (93 aa).

This is an uncharacterized protein from Escherichia coli (strain K12).